Here is a 96-residue protein sequence, read N- to C-terminus: MIDAAQIDHLTALARLELSPAERRTMQQDLTRMLGYFEQLGRVPTEGVQEMQRPVSLVNVLRDDAPGETFPSGVVSALAPETQDGFIRVPRTVDTE.

Belongs to the GatC family. As to quaternary structure, heterotrimer of A, B and C subunits.

It catalyses the reaction L-glutamyl-tRNA(Gln) + L-glutamine + ATP + H2O = L-glutaminyl-tRNA(Gln) + L-glutamate + ADP + phosphate + H(+). It carries out the reaction L-aspartyl-tRNA(Asn) + L-glutamine + ATP + H2O = L-asparaginyl-tRNA(Asn) + L-glutamate + ADP + phosphate + 2 H(+). In terms of biological role, allows the formation of correctly charged Asn-tRNA(Asn) or Gln-tRNA(Gln) through the transamidation of misacylated Asp-tRNA(Asn) or Glu-tRNA(Gln) in organisms which lack either or both of asparaginyl-tRNA or glutaminyl-tRNA synthetases. The reaction takes place in the presence of glutamine and ATP through an activated phospho-Asp-tRNA(Asn) or phospho-Glu-tRNA(Gln). This Deinococcus radiodurans (strain ATCC 13939 / DSM 20539 / JCM 16871 / CCUG 27074 / LMG 4051 / NBRC 15346 / NCIMB 9279 / VKM B-1422 / R1) protein is Glutamyl-tRNA(Gln) amidotransferase subunit C.